The chain runs to 240 residues: Transcriptional regulatory protein ResD (240 aa).

A Response regulatory domain is found at 8 to 121 (KILVVDDEAR…EVVLRVKALL (114 aa)). Aspartate 57 carries the 4-aspartylphosphate modification. The ompR/PhoB-type DNA-binding region spans 137-237 (KNVLVFSHLS…VWGVGYKFEV (101 aa)).

Interacts with the RNA polymerase core. Post-translationally, phosphorylated by ResE.

It is found in the cytoplasm. In terms of biological role, member of the two-component regulatory system ResD/ResE. Required for the expression of resA, ctaA, qcrABC and fnr; activation role in global regulation of aerobic and anaerobic respiration. The sequence is that of Transcriptional regulatory protein ResD (resD) from Bacillus subtilis (strain 168).